The following is a 317-amino-acid chain: Metaxin-1 (317 aa).

Glycyl lysine isopeptide (Lys-Gly) (interchain with G-Cter in ubiquitin) cross-links involve residues K38, K41, and K78. A helical membrane pass occupies residues 164 to 184 (EELEKELYQEARECLTLLSQR).

It belongs to the metaxin family. As to quaternary structure, interacts with MTX2/metaxin-2. Associates with the mitochondrial contact site and cristae organizing system (MICOS) complex, composed of at least MICOS10/MIC10, CHCHD3/MIC19, CHCHD6/MIC25, APOOL/MIC27, IMMT/MIC60, APOO/MIC23/MIC26 and QIL1/MIC13. This complex was also known under the names MINOS or MitOS complex. The MICOS complex associates with mitochondrial outer membrane proteins SAMM50, MTX1 and MTX2 (together described as components of the mitochondrial outer membrane sorting assembly machinery (SAM) complex) and DNAJC11, mitochondrial inner membrane protein TMEM11 and with HSPA9. The MICOS and SAM complexes together with DNAJC11 are part of a large protein complex spanning both membranes termed the mitochondrial intermembrane space bridging (MIB) complex. Interacts with ARMC1. Post-translationally, ubiquitinated by PRKN during mitophagy, leading to its degradation and enhancement of mitophagy. Deubiquitinated by USP30.

It is found in the mitochondrion outer membrane. In terms of biological role, involved in transport of proteins into the mitochondrion. Essential for embryonic development. The chain is Metaxin-1 (MTX1) from Sus scrofa (Pig).